A 165-amino-acid polypeptide reads, in one-letter code: Serine/threonine-protein phosphatase 2A 56 kDa regulatory subunit epsilon isoform (165 aa).

A disordered region spans residues 1-41 (MSSAPTTPPSVDKVDGFSRKSVRKARQKRSQSSSQFRSQGK). Position 2 is an N-acetylserine (serine 2). Threonine 7 is modified (phosphothreonine). Basic residues predominate over residues 20–29 (KSVRKARQKR). Serine 30, serine 32, and serine 34 each carry phosphoserine. Residues 30–41 (SQSSSQFRSQGK) show a composition bias toward low complexity.

Belongs to the phosphatase 2A regulatory subunit B56 family. PP2A consists of a common heterodimeric core enzyme, composed of a 36 kDa catalytic subunit (subunit C) and a 65 kDa constant regulatory subunit (PR65 or subunit A), that associates with a variety of regulatory subunits. Proteins that associate with the core dimer include three families of regulatory subunits B (the R2/B/PR55/B55, R3/B''/PR72/PR130/PR59 and R5/B'/B56 families), the 48 kDa variable regulatory subunit, viral proteins, and cell signaling molecules. Interacts with SGO1. Found in a complex with at least ARL2, PPP2CB; PPP2R1A, PPP2R2A, PPP2R5E and TBCD. In terms of tissue distribution, highly expressed in testis, lung and brain.

It localises to the cytoplasm. Functionally, the B regulatory subunit might modulate substrate selectivity and catalytic activity, and might also direct the localization of the catalytic enzyme to a particular subcellular compartment. The protein is Serine/threonine-protein phosphatase 2A 56 kDa regulatory subunit epsilon isoform (PPP2R5E) of Oryctolagus cuniculus (Rabbit).